Here is a 97-residue protein sequence, read N- to C-terminus: Aspartyl/glutamyl-tRNA(Asn/Gln) amidotransferase subunit C (97 aa).

The protein belongs to the GatC family. In terms of assembly, heterotrimer of A, B and C subunits.

The catalysed reaction is L-glutamyl-tRNA(Gln) + L-glutamine + ATP + H2O = L-glutaminyl-tRNA(Gln) + L-glutamate + ADP + phosphate + H(+). The enzyme catalyses L-aspartyl-tRNA(Asn) + L-glutamine + ATP + H2O = L-asparaginyl-tRNA(Asn) + L-glutamate + ADP + phosphate + 2 H(+). Functionally, allows the formation of correctly charged Asn-tRNA(Asn) or Gln-tRNA(Gln) through the transamidation of misacylated Asp-tRNA(Asn) or Glu-tRNA(Gln) in organisms which lack either or both of asparaginyl-tRNA or glutaminyl-tRNA synthetases. The reaction takes place in the presence of glutamine and ATP through an activated phospho-Asp-tRNA(Asn) or phospho-Glu-tRNA(Gln). The sequence is that of Aspartyl/glutamyl-tRNA(Asn/Gln) amidotransferase subunit C from Nostoc punctiforme (strain ATCC 29133 / PCC 73102).